The following is a 291-amino-acid chain: Formamidopyrimidine-DNA glycosylase (291 aa).

Pro2 (schiff-base intermediate with DNA) is an active-site residue. The active-site Proton donor is the Glu3. Catalysis depends on Lys60, which acts as the Proton donor; for beta-elimination activity. The DNA site is built by His108 and Arg127. The segment at 257 to 291 adopts an FPG-type zinc-finger fold; sequence WVYRRGGQACRICSTPIRRESLCGRGTHWCPNCQR. Arg281 (proton donor; for delta-elimination activity) is an active-site residue.

Belongs to the FPG family. As to quaternary structure, monomer. It depends on Zn(2+) as a cofactor.

The catalysed reaction is Hydrolysis of DNA containing ring-opened 7-methylguanine residues, releasing 2,6-diamino-4-hydroxy-5-(N-methyl)formamidopyrimidine.. It catalyses the reaction 2'-deoxyribonucleotide-(2'-deoxyribose 5'-phosphate)-2'-deoxyribonucleotide-DNA = a 3'-end 2'-deoxyribonucleotide-(2,3-dehydro-2,3-deoxyribose 5'-phosphate)-DNA + a 5'-end 5'-phospho-2'-deoxyribonucleoside-DNA + H(+). Involved in base excision repair of DNA damaged by oxidation or by mutagenic agents. Acts as a DNA glycosylase that recognizes and removes damaged bases. Has a preference for oxidized purines, such as 7,8-dihydro-8-oxoguanine (8-oxoG). Has AP (apurinic/apyrimidinic) lyase activity and introduces nicks in the DNA strand. Cleaves the DNA backbone by beta-delta elimination to generate a single-strand break at the site of the removed base with both 3'- and 5'-phosphates. This is Formamidopyrimidine-DNA glycosylase from Prochlorococcus marinus (strain MIT 9313).